The sequence spans 1744 residues: Probable disease resistance protein At4g19520 (1744 aa).

The region spanning 3-163 (DGKEVYISFN…KIVADVRQKL (161 aa)) is the TIR 1 domain. Residue glutamate 80 is part of the active site. One can recognise an NB-ARC domain in the interval 192–411 (SLGIWGMAGI…VSEKEIFLDI (220 aa)). LRR repeat units lie at residues 503-526 (YEDVKAINLDTSNLPFKGHIAFQH), 557-581 (PPELRLLHWTCYPLHSFPQNFGFQY), 583-602 (VELNMPCSKLKKLWGGTKNL), 603-626 (EVLKRITLSCSVQLLNVDELQYSP), 648-669 (LQHLRIVDLSTCKKIKSFPKVP), 670-692 (PSIRKLHLQGTGIRDLSSLNHSS), 710-733 (DHRKQVLKLKDSSHLGSLPDIVIF), 734-754 (ESLEVLDFSGCSELEDIQGFP), 755-777 (QNLKRLYLAKTAIKEVPSSLCHH), 779-802 (SKLVKLDMENCERLRDLPMGMSNM), 804-823 (YLAVLKLSGCSNLENIKELP), 824-846 (RNLKELYLAGTAVKEFPSTLLET), 848-871 (SEVVLLDLENCKKLQGLPTGMSKL), 892-915 (PLNLIELYLAGTAIRELPPSIGDL), 917-939 (LLDTLDLKNCNRLRHLPMEMHNL), 941-963 (PLKVLDLSNCSELEVFTSSLPKV), 987-1010 (YEHRVTLSLYKARLQYIPEEIRWM), 1011-1035 (PSLKTLDLSRNGFTEVPVSIKDFSK), 1037-1059 (LSLRLRYCENLRSLPQLPRSLQL), and 1062-1086 (AHGCSSLQLITPDFKQLPRYYTFSN). The region spanning 1399 to 1559 (RNNDVFVSFH…KVANDIRKKL (161 aa)) is the TIR 2 domain.

This sequence belongs to the disease resistance TIR-NB-LRR family.

The catalysed reaction is NAD(+) + H2O = ADP-D-ribose + nicotinamide + H(+). In terms of biological role, probable disease resistance protein. The polypeptide is Probable disease resistance protein At4g19520 (Arabidopsis thaliana (Mouse-ear cress)).